The sequence spans 504 residues: MDQVYLPQSVRTAVAVSFGVGLLYWVYRLLLQKTKSLKALDLPVLQSVGDQDIVKTLEEGHAKYPDTPFALGVPGQQLVVLPVSEIDTVKALPENQLSIKKHHYNQFLGEYSYMGTKADEFDDAMRYLLVRNTPAVLASFTAEIDYAMSTVLQVPPNSWTRVKPRSIMPKVATILSGRAFVGLPLSREPDWIESNVNYTQDVSRAWMVLRFYPHWIRPLVAPFLREVKTLEQNKALIGRKIAKLLADQEAQKLSPAQEKIPGGDMIDWFKSRYQAQGKTATAQQLTRDQLLATFASIYNLSNALTYVMFDLAANPAAVDELREELDQVLGPNVGAESIDKTALPRLIKLDSFVRESQRLSPTSLVNIPRIVTDPNGLRLKTGHVIPPGYLVMVRAQPINQSPTLYPNPERFDAFRFARLRQQGGANENRWQHTSTGADNINFGHGIWACPGRFFASAEIKVVVAYVIRHYDLRLIEGRPHPKPKYGGLAIFPDAGAEVELKPRV.

A helical transmembrane segment spans residues Ala-13–Leu-31. Residues Asn-197 and Asn-299 are each glycosylated (N-linked (GlcNAc...) asparagine). Heme is bound at residue Cys-449.

Belongs to the cytochrome P450 family. Heme serves as cofactor.

The protein resides in the membrane. The protein operates within mycotoxin biosynthesis. Its function is as follows. Cytochrome P450 monooxygenase; part of the gene cluster that mediates the biosynthesis of gliotoxin, a member of the epipolythiodioxopiperazine (ETP) class of toxins characterized by a disulfide bridged cyclic dipeptide. The first step in gliotoxin biosynthesis is the condensation of serine and phenylalanine to form the cyclo-L-phenylalanyl-L-serine diketopiperazine (DKP) by the NRPS gliP. GliP is also able to produce the DKP cyclo-L-tryptophanyl-L-serine, suggesting that the substrate specificity of the first adenylation (A) domain in gliP is sufficiently relaxed to accommodate both L-Phe and L-Trp. The cytochrome P450 monooxygenase gliC has been shown to catalyze the subsequent hydroxylation of the alpha-carbon of L-Phe in cyclo-L-phenylalanyl-L-serine whereas the second cytochrome P450 enzyme, gliF, is presumably involved in the modification of the DKP side chain. The glutathione S-transferase (GST) gliG then forms a bis-glutathionylated biosynthetic intermediate which is responsible for the sulfurization of gliotoxin. This bis-glutathionylated intermediate is subsequently processed by the gamma-glutamyl cyclotransferase gliK to remove both gamma-glutamyl moieties. Subsequent processing via gliI yields a biosynthetic intermediate, which is N-methylated via the N-methyltransferase gliN, before the gliotoxin oxidoreductase gliT-mediated disulfide bridge closure. GliN-mediated amide methylation confers stability to ETP, damping the spontaneous formation of tri- and tetrasulfides. Intracellular dithiol gliotoxin oxidized by gliT is subsequently effluxed by gliA. Gliotoxin contributes to pathogenesis during invasive aspergillosis. In macrophages and neutrophils, gliotoxin showed inhibition of various different cell functions including cytokine production, antigen presentation, phagocytosis, and production of reactive oxygen species. The chain is Cytochrome P450 monooxygenase gliF from Aspergillus fumigatus (strain ATCC MYA-4609 / CBS 101355 / FGSC A1100 / Af293) (Neosartorya fumigata).